A 323-amino-acid chain; its full sequence is Beta-ketoacyl-[acyl-carrier-protein] synthase III (323 aa).

Catalysis depends on residues C113 and H250. Residues 251-255 (QANKR) are ACP-binding. N280 is an active-site residue.

This sequence belongs to the thiolase-like superfamily. FabH family. As to quaternary structure, homodimer.

The protein localises to the cytoplasm. The enzyme catalyses malonyl-[ACP] + acetyl-CoA + H(+) = 3-oxobutanoyl-[ACP] + CO2 + CoA. It functions in the pathway lipid metabolism; fatty acid biosynthesis. Catalyzes the condensation reaction of fatty acid synthesis by the addition to an acyl acceptor of two carbons from malonyl-ACP. Catalyzes the first condensation reaction which initiates fatty acid synthesis and may therefore play a role in governing the total rate of fatty acid production. Possesses both acetoacetyl-ACP synthase and acetyl transacylase activities. Its substrate specificity determines the biosynthesis of branched-chain and/or straight-chain of fatty acids. This chain is Beta-ketoacyl-[acyl-carrier-protein] synthase III, found in Brucella canis (strain ATCC 23365 / NCTC 10854 / RM-666).